A 329-amino-acid polypeptide reads, in one-letter code: MARRFLLEFEKPLVELENQIDQIRELARDSEVDVSQQLLQLETLAARRREEIFHALTPAQKIQVARHPQRPSTLDYIQMFCDDWVELHGDRNGTDDQALIGGLARIGEKSVLLIGQQKGRDTKENVARNFGMAKPGGYRKALRLMDHADRFNLPIISFIDTPGAYAGLIAEEQGQGEAIAVNLREMFRLTVPIIATVIGEGGSGGALGIGVADRLLMFEHSVYTVASPEACASILWRDAGKAPEAASALKITGPDLMKLGIVDEVLKEPSGGNNWAPLQAGDTLKNALEKHLSELLALSPDELRNNRYSKFRKMGKYLESQSIESEISV.

The CoA carboxyltransferase C-terminal domain maps to 40-294; sequence QLETLAARRR…KNALEKHLSE (255 aa).

Belongs to the AccA family. In terms of assembly, acetyl-CoA carboxylase is a heterohexamer composed of biotin carboxyl carrier protein (AccB), biotin carboxylase (AccC) and two subunits each of ACCase subunit alpha (AccA) and ACCase subunit beta (AccD).

The protein localises to the cytoplasm. It carries out the reaction N(6)-carboxybiotinyl-L-lysyl-[protein] + acetyl-CoA = N(6)-biotinyl-L-lysyl-[protein] + malonyl-CoA. It participates in lipid metabolism; malonyl-CoA biosynthesis; malonyl-CoA from acetyl-CoA: step 1/1. Component of the acetyl coenzyme A carboxylase (ACC) complex. First, biotin carboxylase catalyzes the carboxylation of biotin on its carrier protein (BCCP) and then the CO(2) group is transferred by the carboxyltransferase to acetyl-CoA to form malonyl-CoA. The polypeptide is Acetyl-coenzyme A carboxylase carboxyl transferase subunit alpha (Prochlorococcus marinus (strain NATL1A)).